The sequence spans 322 residues: Phosphatidylserine decarboxylase proenzyme (322 aa).

Catalysis depends on charge relay system; for autoendoproteolytic cleavage activity residues D90, H147, and S254. The active-site Schiff-base intermediate with substrate; via pyruvic acid; for decarboxylase activity is the S254. S254 carries the post-translational modification Pyruvic acid (Ser); by autocatalysis. Positions 294-322 (EAEPAPLPEEEINAEHDASPLVDDKKDES) are disordered. Positions 306–322 (NAEHDASPLVDDKKDES) are enriched in basic and acidic residues.

This sequence belongs to the phosphatidylserine decarboxylase family. PSD-B subfamily. Prokaryotic type I sub-subfamily. In terms of assembly, heterodimer of a large membrane-associated beta subunit and a small pyruvoyl-containing alpha subunit. Pyruvate is required as a cofactor. In terms of processing, is synthesized initially as an inactive proenzyme. Formation of the active enzyme involves a self-maturation process in which the active site pyruvoyl group is generated from an internal serine residue via an autocatalytic post-translational modification. Two non-identical subunits are generated from the proenzyme in this reaction, and the pyruvate is formed at the N-terminus of the alpha chain, which is derived from the carboxyl end of the proenzyme. The autoendoproteolytic cleavage occurs by a canonical serine protease mechanism, in which the side chain hydroxyl group of the serine supplies its oxygen atom to form the C-terminus of the beta chain, while the remainder of the serine residue undergoes an oxidative deamination to produce ammonia and the pyruvoyl prosthetic group on the alpha chain. During this reaction, the Ser that is part of the protease active site of the proenzyme becomes the pyruvoyl prosthetic group, which constitutes an essential element of the active site of the mature decarboxylase.

It localises to the cell membrane. The catalysed reaction is a 1,2-diacyl-sn-glycero-3-phospho-L-serine + H(+) = a 1,2-diacyl-sn-glycero-3-phosphoethanolamine + CO2. It functions in the pathway phospholipid metabolism; phosphatidylethanolamine biosynthesis; phosphatidylethanolamine from CDP-diacylglycerol: step 2/2. Functionally, catalyzes the formation of phosphatidylethanolamine (PtdEtn) from phosphatidylserine (PtdSer). The chain is Phosphatidylserine decarboxylase proenzyme from Citrobacter koseri (strain ATCC BAA-895 / CDC 4225-83 / SGSC4696).